A 319-amino-acid chain; its full sequence is Lipooligosaccharide heptosyltransferase 2 (319 aa).

Belongs to the glycosyltransferase 9 family.

It catalyses the reaction an L-alpha-D-Hep-(1-&gt;5)-[alpha-Kdo-(2-&gt;4)]-alpha-Kdo-(2-&gt;6)-lipid A + ADP-L-glycero-beta-D-manno-heptose = an L-alpha-D-Hep-(1-&gt;3)-L-alpha-D-Hep-(1-&gt;5)-[alpha-Kdo-(2-&gt;4)]-alpha-Kdo-(2-&gt;6)-lipid A + ADP + H(+). It participates in bacterial outer membrane biogenesis; LOS core biosynthesis. Functionally, glycosyltransferase involved in the biosynthesis of the core oligosaccharide region of lipooligosaccharide (LOS). Catalyzes the addition of the second heptose unit to the heptosyl-Kdo2-lipid A module. In Campylobacter jejuni subsp. jejuni serotype O:2 (strain ATCC 700819 / NCTC 11168), this protein is Lipooligosaccharide heptosyltransferase 2.